We begin with the raw amino-acid sequence, 422 residues long: Mannose-1-phosphate guanylyltransferase regulatory subunit alpha-A (422 aa).

The interval 2–253 is substrate-binding domain; it reads LKAVILIGGP…DRFWSQIKSA (252 aa). The GDP-alpha-D-mannose site is built by Glu-85 and Gln-249. The interval 275–422 is hexapeptide repeat domain; the sequence is LATNTEGGAK…NRSFKNQIIL (148 aa). Positions 358-386 are C-loop; it reads TPSDPNPNDPYAKIDSETLFRDGKLTPSI.

The protein belongs to the transferase hexapeptide repeat family. Component of the GMPPA-GMPPB mannose-1-phosphate guanylyltransferase complex composed of 4 gmppa subunits and 8 gmppb subunits; the complex is organized into three layers, a central layer made up of 2 gmppa dimers sandwiched between two layers each made up of 2 gmppb dimers.

It participates in nucleotide-sugar biosynthesis; GDP-alpha-D-mannose biosynthesis; GDP-alpha-D-mannose from alpha-D-mannose 1-phosphate (GTP route): step 1/1. Functionally, regulatory subunit of the GMPPA-GMPPB mannose-1-phosphate guanylyltransferase complex; reduces the catalytic activity of GMPPB when part of the complex. Mediates allosteric feedback inhibition of GMPPB catalytic activity upon binding GDP-alpha-D-mannose. Together with GMPPB regulates GDP-alpha-D-mannose levels. One of two paralogs (gmppaa and gmppab) that may have redundant functions. The protein is Mannose-1-phosphate guanylyltransferase regulatory subunit alpha-A (gmppaa) of Danio rerio (Zebrafish).